The following is a 257-amino-acid chain: Peptide methionine sulfoxide reductase (257 aa).

Residues 61–88 (LGFGSRPQPDPAASSAIAQGPDDDVPSP) form a disordered region. At S244 the chain carries Phosphoserine.

This sequence belongs to the MsrA Met sulfoxide reductase family.

It carries out the reaction L-methionyl-[protein] + [thioredoxin]-disulfide + H2O = L-methionyl-(S)-S-oxide-[protein] + [thioredoxin]-dithiol. The enzyme catalyses [thioredoxin]-disulfide + L-methionine + H2O = L-methionine (S)-S-oxide + [thioredoxin]-dithiol. Its function is as follows. Has an important function as a repair enzyme for proteins that have been inactivated by oxidation. Catalyzes the reversible oxidation-reduction of methionine sulfoxide in proteins to methionine. The polypeptide is Peptide methionine sulfoxide reductase (PMSR) (Brassica napus (Rape)).